A 268-amino-acid chain; its full sequence is F-actin-capping protein subunit alpha (268 aa).

Serine 2 is modified (N-acetylserine). Serine 17 is modified (phosphoserine).

The protein belongs to the F-actin-capping protein alpha subunit family. In terms of assembly, component of the F-actin capping complex, composed of a heterodimer of an alpha and a beta subunit. Interacts with BSP1 (via C-terminus); leading to recruitment of the F-actin capping complex to actin cortical patches and the acomyosin contractile ring.

The protein localises to the cytoplasm. It localises to the cytoskeleton. The protein resides in the actin patch. Its function is as follows. F-actin-capping proteins bind in a Ca(2+)-independent manner to the fast growing ends of actin filaments (barbed end) thereby blocking the exchange of subunits at these ends. Unlike other capping proteins (such as gelsolin and severin), these proteins do not sever actin filaments. The chain is F-actin-capping protein subunit alpha (CAP1) from Saccharomyces cerevisiae (strain ATCC 204508 / S288c) (Baker's yeast).